Reading from the N-terminus, the 280-residue chain is Large ribosomal subunit protein uL2 (280 aa).

Positions 223-280 (VVMNPVDHPHGGGEGRTSGGRHPVTPWGKPTKGARTRNKNKASSKLIIRSRHAKKKGR) are disordered. Residues 254–280 (KGARTRNKNKASSKLIIRSRHAKKKGR) are compositionally biased toward basic residues.

The protein belongs to the universal ribosomal protein uL2 family. As to quaternary structure, part of the 50S ribosomal subunit. Forms a bridge to the 30S subunit in the 70S ribosome.

One of the primary rRNA binding proteins. Required for association of the 30S and 50S subunits to form the 70S ribosome, for tRNA binding and peptide bond formation. It has been suggested to have peptidyltransferase activity; this is somewhat controversial. Makes several contacts with the 16S rRNA in the 70S ribosome. The chain is Large ribosomal subunit protein uL2 from Dinoroseobacter shibae (strain DSM 16493 / NCIMB 14021 / DFL 12).